The primary structure comprises 485 residues: Zinc finger protein 577 (485 aa).

Residues 1-21 (MKNATIVMSVRREQGSSSGEG) form a disordered region. One can recognise a KRAB domain in the interval 23–94 (LSFEDVAVGF…EGAAHSQICP (72 aa)). Residues 158–180 (HECSVCGRAFSRKAQLIQHQRTE) form a C2H2-type 1; degenerate zinc finger. C2H2-type zinc fingers lie at residues 186–208 (HGCG…QRTH), 214–236 (HECS…QRTH), 242–264 (YRCS…QRSH), 270–292 (YGCS…QRLH), 298–320 (YKCS…QRIH), 326–348 (YECS…QRTH), and 354–376 (YSCR…EKTH).

Belongs to the krueppel C2H2-type zinc-finger protein family.

It localises to the nucleus. Its function is as follows. May be involved in transcriptional regulation. This is Zinc finger protein 577 (ZNF577) from Homo sapiens (Human).